The chain runs to 328 residues: MLNEFPIFDYEDIQLIPNKCVIKSRAEADTSVTLGNHTFKLPVVPANMQTILDENVAEQLAKGGYFYIMHRFDEAGRIPFIKRMHDQGLIASISVGVKDYEYDFVRQLKTDAPEYITIDIAHGHADSVISMIQHIKKELPDTFVIAGNVGTPEAVRELENAGADATKVGIGPGKVCITKVKTGFGTGGWQLAALRWCAKAARKPIIADGGIRTHGDIAKSIRFGASMIMIGSLFAGHIESPGKTIEVDGEQFKEYYGSASQYQKGAYKNVEGKRILLPAKGHLQDTLTEMEQDLQSAISYAGGRQVADLKHVDYVIVKNSIWNGDASH.

Cys-176 serves as the catalytic Thioimidate intermediate. 205–228 (IIADGGIRTHGDIAKSIRFGASMI) lines the NADP(+) pocket.

This sequence belongs to the IMPDH/GMPR family. GuaC type 2 subfamily.

The catalysed reaction is IMP + NH4(+) + NADP(+) = GMP + NADPH + 2 H(+). In terms of biological role, catalyzes the irreversible NADPH-dependent deamination of GMP to IMP. It functions in the conversion of nucleobase, nucleoside and nucleotide derivatives of G to A nucleotides, and in maintaining the intracellular balance of A and G nucleotides. In Streptococcus pneumoniae (strain Taiwan19F-14), this protein is GMP reductase.